The chain runs to 530 residues: Type 2 DNA topoisomerase 6 subunit B (530 aa).

Residues Asn42, Asp76, 97 to 98 (SK), 106 to 113 (GMYGLGVK), and Lys427 contribute to the ATP site.

Belongs to the TOP6B family. Homodimer. Heterotetramer of two Top6A and two Top6B chains.

It catalyses the reaction ATP-dependent breakage, passage and rejoining of double-stranded DNA.. Relaxes both positive and negative superturns and exhibits a strong decatenase activity. This Saccharolobus islandicus (strain M.16.4 / Kamchatka #3) (Sulfolobus islandicus) protein is Type 2 DNA topoisomerase 6 subunit B.